Here is a 156-residue protein sequence, read N- to C-terminus: Movement protein P17 (156 aa).

Residues 38-54 form a homodimerization region; that stretch reads AEDAEEEAIAAQEELEF. 2 disordered regions span residues 55 to 80 and 106 to 156; these read PEDE…EVSP and ASYF…IKRG. The tract at residues 57–156 is RNA-binding; that stretch reads DEAQARHSCL…RAAPKLIKRG (100 aa). Phosphoserine occurs at positions 71, 79, 137, and 140. Residues 144–156 show a composition bias toward basic residues; that stretch reads KLRRAAPKLIKRG.

This sequence belongs to the polerovirus movement protein family. Homodimer. In terms of processing, expressed as a nonphosphorylated 20kDa form and a phosphorylated 22kDa form. Phosphorylated by a host PKC-related kinase. Serine phosphorylation is required for plamodesma targeting.

The protein resides in the host cell junction. It localises to the host plasmodesma. Its subcellular location is the host chloroplast envelope. The protein localises to the host Golgi apparatus. It is found in the host mitochondrion outer membrane. In terms of biological role, together with movement protein P3a, facilitates long-distance movement of virions in host. Transports viral genome to neighboring plant cells directly through plasmosdesmata, without any budding. The movement protein allows efficient cell to cell propagation, by bypassing the host cell wall barrier. Binds ssRNA. The chain is Movement protein P17 from Potato leafroll virus (strain Potato/Canada/Rowhani/1979) (PLrV).